Consider the following 578-residue polypeptide: Vacuolar protein 8 (578 aa).

ARM repeat units follow at residues 58–95 (NRAETDFFRGEPLSALSTLVYSDNVDLQRSASLTFAEI), 96–135 (TERDVREVDRDTLEPILFLLQSSDIEVQRAASAALGNLAV), 137–176 (ADNKVLIVALGGLAPLIRQMMSPNVEVQCNAVGCITNLAT), 178–217 (EDNKAKIARSGALGPLIRLAKSKDMRVQRNATGALLNMTH), 219–258 (DDNRQQLVNAGAIPVLVQLLSSSDVDVQYYCTTALSNIAV), 262–301 (NRKRLAQTESRLVQSLVHLMDSSTPKVQCQAALALRNLAS), 303–342 (EKYQLEIVRAKGLPPLLRLLQSSYLPLILSAVACIRNISI), 344–384 (PLNE…NLAA), and 428–467 (DELKPHLLNLGVFDVLIPLTESESIEVQGNSAAALGNLSS).

It belongs to the beta-catenin family.

The protein resides in the vacuole membrane. In terms of biological role, functions in both vacuole inheritance and protein targeting from the cytoplasm to vacuole. In Aspergillus oryzae (strain ATCC 42149 / RIB 40) (Yellow koji mold), this protein is Vacuolar protein 8 (vac8).